A 128-amino-acid chain; its full sequence is 14.7 kDa protein (128 aa).

The C4-type zinc finger occupies 65-94 (CFDCGAYLYDDHVCKRFTSRSNSDCLSVIH).

In terms of biological role, may act as a regulatory factor during viral transcription. The sequence is that of 14.7 kDa protein from Shallot virus X (ShVX).